A 358-amino-acid polypeptide reads, in one-letter code: Peroxisome biogenesis protein 3-1 (358 aa).

Residues isoleucine 15–tyrosine 32 form a helical membrane-spanning segment. A coiled-coil region spans residues asparagine 33 to alanine 62.

It belongs to the peroxin-3 family.

It localises to the peroxisome membrane. In terms of biological role, involved in morphology determination of peroxisomes, but not in import of peroxisomal matrix proteins. May act as a docking factor for PEX19 and be necessary for the import of peroxisomal membrane proteins in the peroxisomes. The polypeptide is Peroxisome biogenesis protein 3-1 (PEX3-1) (Arabidopsis thaliana (Mouse-ear cress)).